The primary structure comprises 75 residues: UPF0352 protein VV1166 (75 aa).

Belongs to the UPF0352 family.

In Vibrio vulnificus (strain YJ016), this protein is UPF0352 protein VV1166.